Reading from the N-terminus, the 462-residue chain is ATP synthase subunit beta (462 aa).

ATP is bound at residue 152 to 159; it reads GGAGVGKT.

This sequence belongs to the ATPase alpha/beta chains family. As to quaternary structure, F-type ATPases have 2 components, CF(1) - the catalytic core - and CF(0) - the membrane proton channel. CF(1) has five subunits: alpha(3), beta(3), gamma(1), delta(1), epsilon(1). CF(0) has three main subunits: a(1), b(2) and c(9-12). The alpha and beta chains form an alternating ring which encloses part of the gamma chain. CF(1) is attached to CF(0) by a central stalk formed by the gamma and epsilon chains, while a peripheral stalk is formed by the delta and b chains.

It localises to the cell inner membrane. The catalysed reaction is ATP + H2O + 4 H(+)(in) = ADP + phosphate + 5 H(+)(out). Functionally, produces ATP from ADP in the presence of a proton gradient across the membrane. The catalytic sites are hosted primarily by the beta subunits. The sequence is that of ATP synthase subunit beta from Aeromonas hydrophila subsp. hydrophila (strain ATCC 7966 / DSM 30187 / BCRC 13018 / CCUG 14551 / JCM 1027 / KCTC 2358 / NCIMB 9240 / NCTC 8049).